Here is a 461-residue protein sequence, read N- to C-terminus: Protein KlcB (461 aa).

Disordered stretches follow at residues 84–107 (PEAT…TEDK) and 349–379 (RAKA…EDAP). The span at 91–101 (ARRRTKARKSK) shows a compositional bias: basic residues. Over residues 357–377 (GQRREPVTPAKPEPEPAKDED) the composition is skewed to basic and acidic residues.

This is Protein KlcB (klcB) from Escherichia coli.